Consider the following 423-residue polypeptide: UDP-N-acetylglucosamine 1-carboxyvinyltransferase 1 (423 aa).

23-24 (KN) contacts phosphoenolpyruvate. Arg96 provides a ligand contact to UDP-N-acetyl-alpha-D-glucosamine. Catalysis depends on Cys120, which acts as the Proton donor. Cys120 carries the post-translational modification 2-(S-cysteinyl)pyruvic acid O-phosphothioketal. Positions 309 and 331 each coordinate UDP-N-acetyl-alpha-D-glucosamine.

Belongs to the EPSP synthase family. MurA subfamily.

It localises to the cytoplasm. The catalysed reaction is phosphoenolpyruvate + UDP-N-acetyl-alpha-D-glucosamine = UDP-N-acetyl-3-O-(1-carboxyvinyl)-alpha-D-glucosamine + phosphate. Its pathway is cell wall biogenesis; peptidoglycan biosynthesis. In terms of biological role, cell wall formation. Adds enolpyruvyl to UDP-N-acetylglucosamine. The polypeptide is UDP-N-acetylglucosamine 1-carboxyvinyltransferase 1 (Streptococcus pyogenes serotype M3 (strain ATCC BAA-595 / MGAS315)).